The primary structure comprises 469 residues: uncharacterized protein (469 aa).

The stretch at 11–65 (LFISVAFSQESVEDLKRLLEEYKKKIQEIERRLEELEKAKKEEEKKKEAVALKPT) forms a coiled coil.

This is an uncharacterized protein from Aquifex aeolicus (strain VF5).